The chain runs to 37 residues: Large ribosomal subunit protein bL36 (37 aa).

It belongs to the bacterial ribosomal protein bL36 family.

The sequence is that of Large ribosomal subunit protein bL36 from Synechococcus sp. (strain CC9311).